Here is a 268-residue protein sequence, read N- to C-terminus: Uronate dehydrogenase (268 aa).

NAD(+) is bound by residues 17–18, 37–39, 55–56, and 75–79; these read GL, DIS, DL, and FGGVS. Substrate is bound by residues Ser-79 and 115–117; that span reads SNH. Residue Tyr-140 is the Proton acceptor of the active site. Lys-144 lines the NAD(+) pocket. Ser-169 serves as a coordination point for substrate. Position 170 (Ser-170) interacts with NAD(+). A substrate-binding site is contributed by Arg-178.

It belongs to the NAD(P)-dependent epimerase/dehydratase family. Homohexamer.

The enzyme catalyses beta-D-galacturonate + NAD(+) = D-galactaro-1,5-lactone + NADH + H(+). The catalysed reaction is beta-D-glucuronate + NAD(+) = D-glucaro-1,5-lactone + NADH + H(+). The protein operates within carbohydrate acid metabolism; D-galacturonate degradation via prokaryotic oxidative pathway. Functionally, catalyzes the oxidation of beta-D-galacturonate and beta-D-glucuronate to galactarate and D-glucarate, respectively. This is Uronate dehydrogenase (udh) from Pseudomonas putida (strain ATCC 47054 / DSM 6125 / CFBP 8728 / NCIMB 11950 / KT2440).